The primary structure comprises 122 residues: MIQPQTLLNVADNSGARELMCIRIIGASNRRYAHIGDVIVAVIKEAVPNMPLARSEVVRAVIVRTCKELKRDNGMIIRYDDNAAVVIDQEGNPKGTRVFGAIARELRQLNFTKIVSLAPEVL.

Belongs to the universal ribosomal protein uL14 family. Part of the 50S ribosomal subunit.

It is found in the plastid. The protein localises to the chloroplast. Its function is as follows. Binds to 23S rRNA. The sequence is that of Large ribosomal subunit protein uL14c from Panax ginseng (Korean ginseng).